Consider the following 354-residue polypeptide: Neutral protease 2 homolog MEP3 (354 aa).

An N-terminal signal peptide occupies residues 1 to 19; that stretch reads MHFTSSLLALVALTTQALA. Positions 20–179 are excised as a propeptide; the sequence is FPLNDLPKRD…QSAIPKLEKR (160 aa). Disulfide bonds link cysteine 186–cysteine 256 and cysteine 263–cysteine 281. Histidine 305 lines the Zn(2+) pocket. Residue glutamate 306 is part of the active site. Zn(2+) contacts are provided by histidine 309 and aspartate 320.

The protein belongs to the peptidase M35 family. Requires Zn(2+) as cofactor.

It localises to the secreted. It catalyses the reaction Preferential cleavage of bonds with hydrophobic residues in P1'. Also 3-Asn-|-Gln-4 and 8-Gly-|-Ser-9 bonds in insulin B chain.. Its function is as follows. Secreted metalloproteinase that allows assimilation of proteinaceous substrates. Shows high activities on basic nuclear substrates such as histone and protamine. May be involved in virulence. The sequence is that of Neutral protease 2 homolog MEP3 (MEP3) from Coccidioides posadasii (strain C735) (Valley fever fungus).